Reading from the N-terminus, the 478-residue chain is Noelin-2 (478 aa).

Positions 1–16 are cleaved as a signal peptide; sequence MSVPLLKIGAVLSTMA. 7 N-linked (GlcNAc...) asparagine glycosylation sites follow: Asn33, Asn98, Asn179, Asn299, Asn334, Asn423, and Asn465. Coiled coils occupy residues 86-109 and 160-218; these read SREL…LELR and LEQY…QKLG. The region spanning 218–470 is the Olfactomedin-like domain; it reads GCGKLTGVSN…QVLYNVTLFH (253 aa). Cysteines 219 and 401 form a disulfide.

In terms of assembly, peripherally associated with AMPAR complex. AMPAR complex consists of an inner core made of 4 pore-forming GluA/GRIA proteins (GRIA1, GRIA2, GRIA3 and GRIA4) and 4 major auxiliary subunits arranged in a twofold symmetry. One of the two pairs of distinct binding sites is occupied either by CNIH2, CNIH3 or CACNG2, CACNG3. The other harbors CACNG2, CACNG3, CACNG4, CACNG8 or GSG1L. This inner core of AMPAR complex is complemented by outer core constituents binding directly to the GluA/GRIA proteins at sites distinct from the interaction sites of the inner core constituents. Outer core constituents include at least PRRT1, PRRT2, CKAMP44/SHISA9, FRRS1L and NRN1. The proteins of the inner and outer core serve as a platform for other, more peripherally associated AMPAR constituents, including OLFM2. Alone or in combination, these auxiliary subunits control the gating and pharmacology of the AMPAR complex and profoundly impact their biogenesis and protein processing. Interacts with GRIA2. Interacts with OLFM1 and OLFM3. Interacts with SRF; the interaction promotes dissociation of SRF from the transcriptional repressor HEY2. Interacts with RUNX2. In terms of tissue distribution, expressed in the brain (at protein level). Expressed in carotid arteries and the aorta, mainly in aortic SMCs.

Its subcellular location is the secreted. The protein resides in the synapse. It is found in the membrane. It localises to the nucleus. The protein localises to the cytoplasm. In terms of biological role, involved in transforming growth factor beta (TGF-beta)-induced smooth muscle differentiation. TGF-beta induces expression and nuclear translocation of OLFM2 where it binds to SRF, causing its dissociation from the transcriptional repressor HEY2/HERP1 and facilitating binding of SRF to target genes. Plays a role in AMPAR complex organization. Is a regulator of vascular smooth-muscle cell (SMC) phenotypic switching, that acts by promoting RUNX2 and inhibiting MYOCD binding to SRF. SMC phenotypic switching is the process through which vascular SMCs undergo transition between a quiescent contractile phenotype and a proliferative synthetic phenotype in response to pathological stimuli. SMC phenotypic plasticity is essential for vascular development and remodeling. The chain is Noelin-2 (Olfm2) from Rattus norvegicus (Rat).